The sequence spans 396 residues: MSSIKETLEIIKRGADEVLIEEELIKKLQKHKPLIIKFGCDPTAPDIHLGHTVVINKLKQLQDLGHKIHFLIGDFTAQIGDPTGKNATRPPLTAEEVAANAETYTKQVFKILDKDKTIIRRNGDWFNKMSASEMIKLASKSTVARMLERDDFSKRYKGGQSISIHEFLYPLVQGYDSVAMNADIELGGTDQKFNLLMGRELQKQQGQEPQVIITMPLLEGLDGVKKMSKSSQNYIGIEEPANEIFGKIMSISDEFMWRYYELLSFKSLENIAKLKQDVAAGANPRDIKIELAKELIERFHSKEDAESAHQDFIQRFQKNQIPDDINVVELNQELPIANLLKEAGLVASTSEANRMIQQGAVKIDGEKLSDAKIIFAKGTNNVFQVGKRKFAKIIIK.

Residues 42 to 51 (PTAPDIHLGH) carry the 'HIGH' region motif. The 'KMSKS' region motif lies at 226 to 230 (KMSKS). ATP is bound at residue Lys229. The S4 RNA-binding domain maps to 334–395 (LPIANLLKEA…GKRKFAKIII (62 aa)).

Belongs to the class-I aminoacyl-tRNA synthetase family. TyrS type 2 subfamily. In terms of assembly, homodimer.

It localises to the cytoplasm. The enzyme catalyses tRNA(Tyr) + L-tyrosine + ATP = L-tyrosyl-tRNA(Tyr) + AMP + diphosphate + H(+). Functionally, catalyzes the attachment of tyrosine to tRNA(Tyr) in a two-step reaction: tyrosine is first activated by ATP to form Tyr-AMP and then transferred to the acceptor end of tRNA(Tyr). This chain is Tyrosine--tRNA ligase, found in Francisella tularensis subsp. tularensis (strain SCHU S4 / Schu 4).